Reading from the N-terminus, the 398-residue chain is tRNA-specific 2-thiouridylase MnmA (398 aa).

Residues 19-26 and L45 contribute to the ATP site; that span reads AMSGGVDS. C113 functions as the Nucleophile in the catalytic mechanism. An intrachain disulfide couples C113 to C210. G137 provides a ligand contact to ATP. The interval 160-162 is interaction with tRNA; the sequence is RDQ. The active-site Cysteine persulfide intermediate is the C210.

It belongs to the MnmA/TRMU family.

It localises to the cytoplasm. It catalyses the reaction S-sulfanyl-L-cysteinyl-[protein] + uridine(34) in tRNA + AH2 + ATP = 2-thiouridine(34) in tRNA + L-cysteinyl-[protein] + A + AMP + diphosphate + H(+). Functionally, catalyzes the 2-thiolation of uridine at the wobble position (U34) of tRNA, leading to the formation of s(2)U34. The chain is tRNA-specific 2-thiouridylase MnmA from Rhodopseudomonas palustris (strain BisB5).